Here is a 512-residue protein sequence, read N- to C-terminus: Aldehyde dehydrogenase B (512 aa).

Residues glutamate 268 and cysteine 307 contribute to the active site.

Homotetramer.

It catalyses the reaction an aldehyde + NADP(+) + H2O = a carboxylate + NADPH + 2 H(+). It carries out the reaction acetaldehyde + NADP(+) + H2O = acetate + NADPH + 2 H(+). The catalysed reaction is chloroacetaldehyde + NADP(+) + H2O = chloroacetate + NADPH + 2 H(+). The enzyme catalyses propanal + NADP(+) + H2O = propanoate + NADPH + 2 H(+). With respect to regulation, magnesium increases enzyme activity with various substrates. Functionally, catalyzes the NADP(+)-dependent oxidation of diverse aldehydes to their corresponding carboxylic acids, with a preference for acetaldehyde and chloroacetaldehyde. May play a role in detoxifying aldehydes present during stationary phase. Cannot use NAD(+) instead of NADP(+) as the electron acceptor. To a lesser extent is also able to oxidize propionaldehyde (propanal), benzaldehyde, mafosfamide, and 4-hydroperoxycyclophosphamide. Does not use either glyceraldehyde or glycolaldehyde as substrates. This chain is Aldehyde dehydrogenase B, found in Escherichia coli (strain K12).